The following is a 264-amino-acid chain: Gap junction beta-1 protein (264 aa).

The Cytoplasmic portion of the chain corresponds to 1–22 (MNWAGLYAILSGVNRHSTSIGR). A helical membrane pass occupies residues 23-45 (IWLSVVFIFRIMVLVAAAESVWG). At 46–75 (DEKSAFTCNTQQPGCNSVCYDHFFPISHIR) the chain is on the extracellular side. A helical membrane pass occupies residues 76–98 (LWALQLIIVSTPALLVAMHVAHL). Residues 99 to 130 (QHQEKKELRLSRHVKDQELAEVKKHKVKISGT) are Cytoplasmic-facing. A helical membrane pass occupies residues 131–153 (LWWTYISSVFFRIIFEAAFMYIF). The Extracellular portion of the chain corresponds to 154–191 (YLIYPGYSMIRLLKCDAYPCPNTVDCFVSRPTEKTIFT). Residues 192 to 214 (VFMLVASGVCIVLNVAEVFFLIA) traverse the membrane as a helical segment. At 215–264 (QACTRRARRHRDSGSISKEHQQNEMNLLITGGSIIKRSAGQEKGDHCSTS) the chain is on the cytoplasmic side.

The protein belongs to the connexin family. Beta-type (group I) subfamily. A connexon is composed of a hexamer of connexins. In terms of tissue distribution, lung, liver, intestines, stomach and kidney.

It localises to the cell membrane. The protein localises to the cell junction. It is found in the gap junction. One gap junction consists of a cluster of closely packed pairs of transmembrane channels, the connexons, through which materials of low MW diffuse from one cell to a neighboring cell. This Xenopus laevis (African clawed frog) protein is Gap junction beta-1 protein (gjb1).